The sequence spans 140 residues: Endoribonuclease YbeY (140 aa).

Residues His-100, His-104, and His-110 each coordinate Zn(2+).

The protein belongs to the endoribonuclease YbeY family. Requires Zn(2+) as cofactor.

It is found in the cytoplasm. Its function is as follows. Single strand-specific metallo-endoribonuclease involved in late-stage 70S ribosome quality control and in maturation of the 3' terminus of the 16S rRNA. The sequence is that of Endoribonuclease YbeY from Helicobacter pylori (strain Shi470).